Consider the following 60-residue polypeptide: Large ribosomal subunit protein bL32 (60 aa).

Positions 1–60 (MAVQQNKKSRSARDMRRSHDALSENALSVEKTTGEVHLRHHVSPEGVYRGRKVVDKGADE) are disordered. Basic and acidic residues predominate over residues 11 to 22 (SARDMRRSHDAL).

It belongs to the bacterial ribosomal protein bL32 family.

This Pseudomonas putida (strain ATCC 700007 / DSM 6899 / JCM 31910 / BCRC 17059 / LMG 24140 / F1) protein is Large ribosomal subunit protein bL32.